Consider the following 330-residue polypeptide: tRNA U34 carboxymethyltransferase (330 aa).

Residues Lys-91, Trp-105, Lys-110, Gly-130, 152–154 (DPS), 181–182 (IE), Met-196, Tyr-200, and Arg-315 contribute to the carboxy-S-adenosyl-L-methionine site.

It belongs to the class I-like SAM-binding methyltransferase superfamily. CmoB family. In terms of assembly, homotetramer.

It catalyses the reaction carboxy-S-adenosyl-L-methionine + 5-hydroxyuridine(34) in tRNA = 5-carboxymethoxyuridine(34) in tRNA + S-adenosyl-L-homocysteine + H(+). In terms of biological role, catalyzes carboxymethyl transfer from carboxy-S-adenosyl-L-methionine (Cx-SAM) to 5-hydroxyuridine (ho5U) to form 5-carboxymethoxyuridine (cmo5U) at position 34 in tRNAs. This chain is tRNA U34 carboxymethyltransferase, found in Shewanella sediminis (strain HAW-EB3).